Here is a 196-residue protein sequence, read N- to C-terminus: Large ribosomal subunit protein uL5 (196 aa).

The protein belongs to the universal ribosomal protein uL5 family. In terms of assembly, part of the 50S ribosomal subunit; part of the 5S rRNA/L5/L18/L25 subcomplex. Contacts the 5S rRNA and the P site tRNA. Forms a bridge to the 30S subunit in the 70S ribosome.

Its function is as follows. This is one of the proteins that bind and probably mediate the attachment of the 5S RNA into the large ribosomal subunit, where it forms part of the central protuberance. In the 70S ribosome it contacts protein S13 of the 30S subunit (bridge B1b), connecting the 2 subunits; this bridge is implicated in subunit movement. Contacts the P site tRNA; the 5S rRNA and some of its associated proteins might help stabilize positioning of ribosome-bound tRNAs. The sequence is that of Large ribosomal subunit protein uL5 from Rhodopirellula baltica (strain DSM 10527 / NCIMB 13988 / SH1).